We begin with the raw amino-acid sequence, 435 residues long: Eukaryotic peptide chain release factor subunit 1-3 (435 aa).

N-acetylalanine is present on Ala2.

This sequence belongs to the eukaryotic release factor 1 family. Heterodimer of two subunits, one of which binds GTP.

The protein localises to the cytoplasm. Directs the termination of nascent peptide synthesis (translation) in response to the termination codons UAA, UAG and UGA. Modulates plant growth and development. This chain is Eukaryotic peptide chain release factor subunit 1-3, found in Brassica oleracea var. botrytis (Cauliflower).